The following is a 647-amino-acid chain: Threonine--tRNA ligase (647 aa).

The TGS domain maps to 1–63 (MDKINITFPD…EEDGSIEIVT (63 aa)). The tract at residues 242–540 (DHRKIGKELD…LTEETKGAFP (299 aa)) is catalytic. 3 residues coordinate Zn(2+): Cys-336, His-387, and His-517.

The protein belongs to the class-II aminoacyl-tRNA synthetase family. Homodimer. It depends on Zn(2+) as a cofactor.

It localises to the cytoplasm. It catalyses the reaction tRNA(Thr) + L-threonine + ATP = L-threonyl-tRNA(Thr) + AMP + diphosphate + H(+). Functionally, catalyzes the attachment of threonine to tRNA(Thr) in a two-step reaction: L-threonine is first activated by ATP to form Thr-AMP and then transferred to the acceptor end of tRNA(Thr). Also edits incorrectly charged L-seryl-tRNA(Thr). This Staphylococcus carnosus (strain TM300) protein is Threonine--tRNA ligase.